Consider the following 932-residue polypeptide: MERYDIVRIIGKGGMGEVYLAYDPVCSRKVALKKIREDLAENPLLKRRFLREARIAADLIHPGVVPVYTIYSEKDPVYYTMPYIEGYTLKTLLKSVWQKESLSKELAEKTSVGAFLSIFHKICCTIEYVHSRGILHRDLKPDNILLGLFSEAVILDWGAAVACGEEEDLLDIDVSKEEVLSSRMTIPGRIVGTPDYMAPERLLGHPASKSTDIYALGVVLYQMLTLSFPYRRKKGKKIVLDGQRIPSPQEVAPYREIPPFLSAVVMRMLAVDPQERYSSVTELKEDIESHLKGSPKWTLTTALPPKKSSSWKLNEPILLSKYFPMLEVSPASWYSLAISNIESFSEMRLEYTLSKKGLNEGFGILLPTSENALGGDFYQGYGFWLHIKERTLSVSLVKNSLEIQRCSQDLESDKETFLIALEQHNHSLSLFVDGTTWLIHMNYLPSRSGRVAIIVRDMEDILEDIGIFESSGSLRVSCLAVPDAFLAEKLYDRALVLYRRIAESFPGRKEGYEARFRAGITVLEKASTDNNEQEFALAIEEFSKLHDGVAAPLEYLGKALVYQRLQEYNEEIKSLLLALKRYSQHPEIFRLKDHVVYRLHESFYKRDRLALVFMILVLEIAPQAITPGQEEKILVWLKDKSRATLFCLLDPTVLELRSSKMELFLSYWSGFIPHLNSLFHRAWDQSDVRALIEIFYVACDLHKWQFLSSCIDIFKESLEDQKATEEIVEFSFEDLGAFLFAIQSIFNKEDAEKIFVSNDQLSPILLVYIFDLFANRALLESQGEAIFQALDLIRSKVPENFYHDYLRNHEIRAHLWCRNEKALSTIFENYTEKQLKDEQHELFVLYGCYLALIQGAEAAKQHFDVCREDRIFPASLLARNYNRLGLPKDALSYQERRLLLRQKFLYFHCLGNHDERDLCQTMYHLLTEEFQL.

In terms of domain architecture, Protein kinase spans 4–291 (YDIVRIIGKG…ELKEDIESHL (288 aa)). ATP is bound by residues 10-18 (IGKGGMGEV) and lysine 33. The Proton acceptor role is filled by aspartate 138.

This sequence belongs to the protein kinase superfamily. Ser/Thr protein kinase family. In terms of processing, autophosphorylated on serine and threonine residues.

It carries out the reaction L-seryl-[protein] + ATP = O-phospho-L-seryl-[protein] + ADP + H(+). The enzyme catalyses L-threonyl-[protein] + ATP = O-phospho-L-threonyl-[protein] + ADP + H(+). In terms of biological role, together with the serine/threonine kinase Pkn1, may play a role in the specific interactions with host proteins during intracellular growth. In Chlamydia pneumoniae (Chlamydophila pneumoniae), this protein is Serine/threonine-protein kinase PknD.